The sequence spans 232 residues: DNA damage-inducible transcript 4 protein (232 aa).

The interval 1–71 is disordered; sequence MPSLWDRFSS…SGFGPEEDTA (71 aa). Low complexity predominate over residues 9-22; the sequence is SSSSTSSSPSSLPR. Residue Ser-19 is modified to Phosphoserine. Residues Thr-23 and Thr-25 each carry the phosphothreonine modification. Ser-121 bears the Phosphoserine mark.

It belongs to the DDIT4 family. Monomer. Interacts with BTRC. Identified in a complex with CUL4A, DDB1 and BTRC. Interacts with TXNIP; this inhibits the proteasomal degradation of DDIT4. Phosphorylated by GSK3B; this promotes proteasomal degradation. Post-translationally, polyubiquitinated by a DCX (DDB1-CUL4A-RBX1) E3 ubiquitin-protein ligase complex with BTRC as substrate-recognition component, leading to its proteasomal degradation. Broadly expressed, with lowest levels in brain, skeletal muscle and intestine. Up-regulated in substantia nigra neurons from Parkinson disease patients (at protein level).

The protein resides in the mitochondrion. It is found in the cytoplasm. Its subcellular location is the cytosol. In terms of biological role, regulates cell growth, proliferation and survival via inhibition of the activity of the mammalian target of rapamycin complex 1 (mTORC1). Inhibition of mTORC1 is mediated by a pathway that involves DDIT4/REDD1, AKT1, the TSC1-TSC2 complex and the GTPase RHEB. Plays an important role in responses to cellular energy levels and cellular stress, including responses to hypoxia and DNA damage. Regulates p53/TP53-mediated apoptosis in response to DNA damage via its effect on mTORC1 activity. Its role in the response to hypoxia depends on the cell type; it mediates mTORC1 inhibition in fibroblasts and thymocytes, but not in hepatocytes. Required for mTORC1-mediated defense against viral protein synthesis and virus replication. Inhibits neuronal differentiation and neurite outgrowth mediated by NGF via its effect on mTORC1 activity. Required for normal neuron migration during embryonic brain development. Plays a role in neuronal cell death. This chain is DNA damage-inducible transcript 4 protein (DDIT4), found in Homo sapiens (Human).